The chain runs to 106 residues: Large ribosomal subunit protein uL24 (106 aa).

Belongs to the universal ribosomal protein uL24 family. In terms of assembly, part of the 50S ribosomal subunit.

One of two assembly initiator proteins, it binds directly to the 5'-end of the 23S rRNA, where it nucleates assembly of the 50S subunit. Its function is as follows. One of the proteins that surrounds the polypeptide exit tunnel on the outside of the subunit. The protein is Large ribosomal subunit protein uL24 of Marinobacter nauticus (strain ATCC 700491 / DSM 11845 / VT8) (Marinobacter aquaeolei).